The following is a 657-amino-acid chain: Oleate activated transcription factor 3 (657 aa).

The zn(2)-C6 fungal-type DNA-binding region spans 21-48; that stretch reads CLNCRRRKTKCDRGKPSCSNCLKLGETC.

It belongs to the OAF3 family.

Its subcellular location is the cytoplasm. The protein resides in the nucleus. The protein localises to the mitochondrion. Transcriptional inhibitor with a significantly increased number of target genes in response to oleate. In Kluyveromyces lactis (strain ATCC 8585 / CBS 2359 / DSM 70799 / NBRC 1267 / NRRL Y-1140 / WM37) (Yeast), this protein is Oleate activated transcription factor 3 (OAF3).